Consider the following 314-residue polypeptide: Dihydropteroate synthase (314 aa).

A Pterin-binding domain is found at 10–294 (TVICGIINVT…DVASHRMAVE (285 aa)). Asparagine 17 provides a ligand contact to Mg(2+). (7,8-dihydropterin-6-yl)methyl diphosphate contacts are provided by residues threonine 57, aspartate 91, asparagine 110, aspartate 201, lysine 237, and 282–284 (RVH).

Belongs to the DHPS family. In terms of assembly, homodimer or homotrimer. It depends on Mg(2+) as a cofactor.

It carries out the reaction (7,8-dihydropterin-6-yl)methyl diphosphate + 4-aminobenzoate = 7,8-dihydropteroate + diphosphate. The protein operates within cofactor biosynthesis; tetrahydrofolate biosynthesis; 7,8-dihydrofolate from 2-amino-4-hydroxy-6-hydroxymethyl-7,8-dihydropteridine diphosphate and 4-aminobenzoate: step 1/2. Its function is as follows. Catalyzes the condensation of para-aminobenzoate (pABA) with 6-hydroxymethyl-7,8-dihydropterin diphosphate (DHPt-PP) to form 7,8-dihydropteroate (H2Pte), the immediate precursor of folate derivatives. This Streptococcus pneumoniae serotype 4 (strain ATCC BAA-334 / TIGR4) protein is Dihydropteroate synthase (sulA).